The following is a 145-amino-acid chain: HTH-type transcriptional regulator MhqR (145 aa).

Residues 5-137 form the HTH marR-type domain; the sequence is SLKLFIVLSR…CTEMLKRVGL (133 aa). A DNA-binding region (H-T-H motif) is located at residues 51-74; the sequence is LQQIGDKILLASGSITYVVDKLEQ.

Negatively regulates mhqA, mhqED, mhqNOP, and azoR2 which may contribute to the degradation of aromatic compounds. This is HTH-type transcriptional regulator MhqR (mhqR) from Bacillus subtilis (strain 168).